We begin with the raw amino-acid sequence, 448 residues long: Trigger factor (448 aa).

The PPIase FKBP-type domain maps to 161-246; that stretch reads GDQVTIDFEG…VHKVAGKQLP (86 aa). Positions 428-448 are disordered; it reads ALQAAQQQEGAEEEAQEETSA. The segment covering 437–448 has biased composition (acidic residues); it reads GAEEEAQEETSA.

It belongs to the FKBP-type PPIase family. Tig subfamily.

It is found in the cytoplasm. The enzyme catalyses [protein]-peptidylproline (omega=180) = [protein]-peptidylproline (omega=0). Involved in protein export. Acts as a chaperone by maintaining the newly synthesized protein in an open conformation. Functions as a peptidyl-prolyl cis-trans isomerase. This Chromohalobacter salexigens (strain ATCC BAA-138 / DSM 3043 / CIP 106854 / NCIMB 13768 / 1H11) protein is Trigger factor.